The chain runs to 338 residues: MLIAQRPSLTEEVVDEFRSRFVIEPLEPGFGYTLGNSLRRTLLSSIPGAAVTSIRVDGVLHEFTTVPGVKEDVTDLILNIKQLVVSSEHDEPVVMYLRKQGPGLVTAADIAPPAGVEVHNPDLVLATLNGKGKLEMELTVERGRGYVSAVQNKQVGQEIGRIPVDSIYSPVLKVTYKVEATRVEQRTDFDKLIVDVETKQAMRPRDAMASAGKTLVELFGLARELNIDAEGIDMGPSPVDAALAADLVMPIEELELTVRSYNCLKREGVHSVGELVARSEADLLDIRNFGAKSIDEVKAKLAGMGLGLKDSPPGFDPTAAALGADDDADAGFLETEHY.

Positions 1–226 are alpha N-terminal domain (alpha-NTD); the sequence is MLIAQRPSLT…ELFGLARELN (226 aa). The alpha C-terminal domain (alpha-CTD) stretch occupies residues 243–338; it reads LAADLVMPIE…DAGFLETEHY (96 aa).

This sequence belongs to the RNA polymerase alpha chain family. Homodimer. The RNAP catalytic core consists of 2 alpha, 1 beta, 1 beta' and 1 omega subunit. When a sigma factor is associated with the core the holoenzyme is formed, which can initiate transcription.

It catalyses the reaction RNA(n) + a ribonucleoside 5'-triphosphate = RNA(n+1) + diphosphate. DNA-dependent RNA polymerase catalyzes the transcription of DNA into RNA using the four ribonucleoside triphosphates as substrates. This is DNA-directed RNA polymerase subunit alpha from Streptomyces avermitilis (strain ATCC 31267 / DSM 46492 / JCM 5070 / NBRC 14893 / NCIMB 12804 / NRRL 8165 / MA-4680).